The primary structure comprises 493 residues: Cytochrome P450 2E1 (493 aa).

Residue 298 to 303 (FAGTET) coordinates substrate. A heme-binding site is contributed by Cys-437.

It belongs to the cytochrome P450 family. As to quaternary structure, interacts with chaperones HSP70 and HSP90; this interaction is required for initial targeting to mitochondria. It depends on heme as a cofactor. In terms of tissue distribution, highest level in the liver and to a lesser extent in the kidney, with a higher level in the male kidney than in the female.

It is found in the endoplasmic reticulum membrane. The protein localises to the microsome membrane. Its subcellular location is the mitochondrion inner membrane. The enzyme catalyses an organic molecule + reduced [NADPH--hemoprotein reductase] + O2 = an alcohol + oxidized [NADPH--hemoprotein reductase] + H2O + H(+). The catalysed reaction is (5Z,8Z,11Z)-eicosatrienoate + reduced [NADPH--hemoprotein reductase] + O2 = 19-hydroxy-(5Z,8Z,11Z)-eicosatrienoate + oxidized [NADPH--hemoprotein reductase] + H2O + H(+). It catalyses the reaction (5Z,8Z,11Z,14Z,17Z)-eicosapentaenoate + reduced [NADPH--hemoprotein reductase] + O2 = 19-hydroxy-(5Z,8Z,11Z,14Z,17Z)-eicosapentaenoate + oxidized [NADPH--hemoprotein reductase] + H2O + H(+). It carries out the reaction (4Z,7Z,10Z,13Z,16Z,19Z)-docosahexaenoate + reduced [NADPH--hemoprotein reductase] + O2 = 21-hydroxy-(4Z,7Z,10Z,13Z,16Z,19Z)-docosahexaenoate + oxidized [NADPH--hemoprotein reductase] + H2O + H(+). The enzyme catalyses dodecanoate + reduced [NADPH--hemoprotein reductase] + O2 = 11-hydroxydodecanoate + oxidized [NADPH--hemoprotein reductase] + H2O + H(+). The catalysed reaction is tetradecanoate + reduced [NADPH--hemoprotein reductase] + O2 = 13-hydroxytetradecanoate + oxidized [NADPH--hemoprotein reductase] + H2O + H(+). It catalyses the reaction 4-nitrophenol + NADPH + O2 + H(+) = 4-nitrocatechol + NADP(+) + H2O. It functions in the pathway lipid metabolism; fatty acid metabolism. The omega-1 hydroxylase activity is stimulated by cytochrome b5. Functionally, a cytochrome P450 monooxygenase involved in the metabolism of fatty acids. Mechanistically, uses molecular oxygen inserting one oxygen atom into a substrate, and reducing the second into a water molecule, with two electrons provided by NADPH via cytochrome P450 reductase (NADPH--hemoprotein reductase). Catalyzes the hydroxylation of carbon-hydrogen bonds. Hydroxylates fatty acids specifically at the omega-1 position displaying the highest catalytic activity for saturated fatty acids. May be involved in the oxidative metabolism of xenobiotics. The sequence is that of Cytochrome P450 2E1 (Cyp2e1) from Mus musculus (Mouse).